The sequence spans 416 residues: Squamosa promoter-binding-like protein 8 (416 aa).

The interval 11-51 (SSCDDFGYNATPPPPPSLLPIMDQDGGGGSIQRDHHQHHNH) is disordered. The SBP-type zinc-finger motif lies at 182-260 (PPRCQAEGCK…ADHNRRRRKS (79 aa)). 8 residues coordinate Zn(2+): Cys-185, Cys-190, Cys-207, His-210, Cys-227, Cys-230, His-234, and Cys-246. A Bipartite nuclear localization signal motif is present at residues 243-259 (KKSCRKRLADHNRRRRK). The segment at 250-299 (LADHNRRRRKSKPSDGEHSGEKRRAQANKSAATKDKAGSSSKNAGIGDGF) is disordered. Residues 261–273 (KPSDGEHSGEKRR) show a composition bias toward basic and acidic residues.

Expressed in stems, leaf sheaths, and young panicles. Weakly expressed in ligules, auricles, and leaf sheaths at the basal region.

Its subcellular location is the nucleus. Its function is as follows. Probable transcription factor that plays an important role in building the laminar joint between leaf blade and leaf sheath boundary, thereby controlling ligule and auricle development. This Oryza sativa subsp. japonica (Rice) protein is Squamosa promoter-binding-like protein 8 (SPL8).